The primary structure comprises 205 residues: Delta-aminolevulinic acid dehydratase (205 aa).

Zn(2+) is bound by residues Cys117, Cys119, and Cys127. The active-site Schiff-base intermediate with substrate is the Lys192. Arg202 contributes to the substrate binding site.

It belongs to the ALAD family. In terms of assembly, homooctamer. The cofactor is Zn(2+).

It catalyses the reaction 2 5-aminolevulinate = porphobilinogen + 2 H2O + H(+). The protein operates within porphyrin-containing compound metabolism; protoporphyrin-IX biosynthesis; coproporphyrinogen-III from 5-aminolevulinate: step 1/4. Its function is as follows. Catalyzes an early step in the biosynthesis of tetrapyrroles. Binds two molecules of 5-aminolevulinate per subunit, each at a distinct site, and catalyzes their condensation to form porphobilinogen. The chain is Delta-aminolevulinic acid dehydratase (hemB) from Ruminiclostridium josui (Clostridium josui).